Consider the following 608-residue polypeptide: Nuclear protein localization protein 4 homolog (608 aa).

The residue at position 2 (Ala-2) is an N-acetylalanine. Lys-179 carries the N6-acetyllysine modification. One can recognise an MPN domain in the interval 226 to 363 (IMFENHTVAD…ICRLSPDGHF (138 aa)). The RanBP2-type zinc-finger motif lies at 580–608 (TSAMWACQHCTFMNQPGTGHCEMCSLPRT).

The protein belongs to the NPL4 family. In terms of assembly, heterodimer with UFD1. The heterodimer binds ubiquitinated proteins. The heterodimer binds to VCP and inhibits Golgi membrane fusion. Interacts with ZFAND2B; probably through VCP.

Its subcellular location is the cytoplasm. It is found in the cytosol. The protein localises to the endoplasmic reticulum. It localises to the nucleus. It participates in protein degradation; proteasomal ubiquitin-dependent pathway. In terms of biological role, the ternary complex containing UFD1, VCP and NPLOC4 binds ubiquitinated proteins and is necessary for the export of misfolded proteins from the ER to the cytoplasm, where they are degraded by the proteasome. The NPLOC4-UFD1-VCP complex regulates spindle disassembly at the end of mitosis and is necessary for the formation of a closed nuclear envelope. Acts as a negative regulator of type I interferon production via the complex formed with VCP and UFD1, which binds to RIGI and recruits RNF125 to promote ubiquitination and degradation of RIGI. In Rattus norvegicus (Rat), this protein is Nuclear protein localization protein 4 homolog (Nploc4).